Reading from the N-terminus, the 350-residue chain is Biotin synthase (350 aa).

Positions 41 to 268 constitute a Radical SAM core domain; that stretch reads NEVQISRLLS…LSRVRLSAGR (228 aa). Cys-56, Cys-60, and Cys-63 together coordinate [4Fe-4S] cluster. [2Fe-2S] cluster is bound by residues Cys-100, Cys-131, Cys-191, and Arg-263.

Belongs to the radical SAM superfamily. Biotin synthase family. As to quaternary structure, homodimer. [4Fe-4S] cluster serves as cofactor. [2Fe-2S] cluster is required as a cofactor.

It carries out the reaction (4R,5S)-dethiobiotin + (sulfur carrier)-SH + 2 reduced [2Fe-2S]-[ferredoxin] + 2 S-adenosyl-L-methionine = (sulfur carrier)-H + biotin + 2 5'-deoxyadenosine + 2 L-methionine + 2 oxidized [2Fe-2S]-[ferredoxin]. Its pathway is cofactor biosynthesis; biotin biosynthesis; biotin from 7,8-diaminononanoate: step 2/2. Functionally, catalyzes the conversion of dethiobiotin (DTB) to biotin by the insertion of a sulfur atom into dethiobiotin via a radical-based mechanism. In Shewanella baltica (strain OS223), this protein is Biotin synthase.